The sequence spans 317 residues: Aspartate carbamoyltransferase catalytic subunit (317 aa).

The carbamoyl phosphate site is built by R66 and T67. K94 is a binding site for L-aspartate. R116, H144, and Q147 together coordinate carbamoyl phosphate. L-aspartate is bound by residues R177 and R231. Carbamoyl phosphate is bound by residues G272 and P273.

Belongs to the aspartate/ornithine carbamoyltransferase superfamily. ATCase family. As to quaternary structure, heterododecamer (2C3:3R2) of six catalytic PyrB chains organized as two trimers (C3), and six regulatory PyrI chains organized as three dimers (R2).

The enzyme catalyses carbamoyl phosphate + L-aspartate = N-carbamoyl-L-aspartate + phosphate + H(+). The protein operates within pyrimidine metabolism; UMP biosynthesis via de novo pathway; (S)-dihydroorotate from bicarbonate: step 2/3. In terms of biological role, catalyzes the condensation of carbamoyl phosphate and aspartate to form carbamoyl aspartate and inorganic phosphate, the committed step in the de novo pyrimidine nucleotide biosynthesis pathway. This is Aspartate carbamoyltransferase catalytic subunit from Rhodopseudomonas palustris (strain ATCC BAA-98 / CGA009).